The primary structure comprises 298 residues: Quinolinate synthase (298 aa).

Iminosuccinate is bound by residues His19 and Ser36. [4Fe-4S] cluster is bound at residue Cys81. Iminosuccinate contacts are provided by residues 107-109 (YVN) and Ser124. Cys168 serves as a coordination point for [4Fe-4S] cluster. Iminosuccinate-binding positions include 193–195 (HPE) and Thr210. Cys254 is a [4Fe-4S] cluster binding site.

The protein belongs to the quinolinate synthase family. Type 2 subfamily. Requires [4Fe-4S] cluster as cofactor.

The protein localises to the cytoplasm. It catalyses the reaction iminosuccinate + dihydroxyacetone phosphate = quinolinate + phosphate + 2 H2O + H(+). The protein operates within cofactor biosynthesis; NAD(+) biosynthesis; quinolinate from iminoaspartate: step 1/1. With respect to regulation, inhibited by 4,5 dithiohydroxyphthalic acid (DTHPA) analogs, which bind to the catalytic iron site of the [4Fe-4S] cluster. Catalyzes the condensation of iminoaspartate with dihydroxyacetone phosphate to form quinolinate. This chain is Quinolinate synthase, found in Thermotoga maritima (strain ATCC 43589 / DSM 3109 / JCM 10099 / NBRC 100826 / MSB8).